The chain runs to 762 residues: Probable inorganic carbon transporter subunit DabA (762 aa).

Residues Cys279, Asp281, His461, and Cys476 each contribute to the Zn(2+) site.

This sequence belongs to the inorganic carbon transporter (TC 9.A.2) DabA family. In terms of assembly, forms a complex with DabB. The cofactor is Zn(2+).

The protein resides in the cell inner membrane. Functionally, part of an energy-coupled inorganic carbon pump. The polypeptide is Probable inorganic carbon transporter subunit DabA (Legionella pneumophila subsp. pneumophila (strain Philadelphia 1 / ATCC 33152 / DSM 7513)).